The following is a 161-amino-acid chain: Vitamin K epoxide reductase complex subunit 1 (161 aa).

Topologically, residues 1-9 (MGTTWRSPG) are cytoplasmic. Residues 10 to 29 (RLRLALCLAGLALSLYALHV) form a helical membrane-spanning segment. Residues 30–80 (KAARARNEDYRALCDVGTAISCSRVFSSRWGRGFGLVEHVLGADSILNQSN) lie on the Lumenal side of the membrane. The cysteines at positions 43 and 51 are disulfide-linked. Residue N80 participates in (S)-warfarin binding. The helical transmembrane segment at 81 to 95 (SIFGCMFYTIQLLLG) threads the bilayer. Residues 96–100 (CLRGR) are Cytoplasmic-facing. A helical membrane pass occupies residues 101-128 (WASILLILSSLVSVAGSLYLAWILFFVL). Over 129 to 131 (YDF) the chain is Lumenal. A disulfide bond links C132 and C135. Residues 132 to 153 (CIVCITTYAINAGLMLLSFQKV) traverse the membrane as a helical segment. Phylloquinone contacts are provided by C135 and Y139. Residue Y139 coordinates (S)-warfarin. At 154-161 (PEHKVKKP) the chain is on the cytoplasmic side.

The protein belongs to the VKOR family. As to expression, highly expressed in liver. Detected at lower levels in lung, kidney and testis.

The protein resides in the endoplasmic reticulum membrane. The enzyme catalyses phylloquinone + [protein]-disulfide + H2O = 2,3-epoxyphylloquinone + [protein]-dithiol. The catalysed reaction is phylloquinol + [protein]-disulfide = phylloquinone + [protein]-dithiol. Its activity is regulated as follows. Inhibited by warfarin (coumadin). Warfarin locks VKORC1 in both redox states into the closed conformation. Functionally, involved in vitamin K metabolism. Catalytic subunit of the vitamin K epoxide reductase (VKOR) complex which reduces inactive vitamin K 2,3-epoxide to active vitamin K. Vitamin K is required for the gamma-carboxylation of various proteins, including clotting factors, and is required for normal blood coagulation, but also for normal bone development. This chain is Vitamin K epoxide reductase complex subunit 1 (Vkorc1), found in Rattus norvegicus (Rat).